The following is a 905-amino-acid chain: Translation initiation factor IF-2 (905 aa).

3 disordered regions span residues 52-84 (QSHGQKEKRRISLKSKTTSTARVTGSSGKSKSV), 116-230 (AKKR…QKKT), and 269-318 (FEKE…FEKP). The segment covering 65–84 (KSKTTSTARVTGSSGKSKSV) has biased composition (polar residues). Basic and acidic residues predominate over residues 116–138 (AKKRAEEEAKKREQVKKEAEERQ). Residues 165-178 (VVVKKGSKAAAAAK) show a composition bias toward low complexity. 2 stretches are compositionally biased toward basic and acidic residues: residues 190–230 (PKVE…QKKT) and 269–278 (FEKERREIKR). The 170-residue stretch at 406 to 575 (TRPPVVTIMG…NLQAELMELE (170 aa)) folds into the tr-type G domain. The G1 stretch occupies residues 415–422 (GHVDHGKT). 415-422 (GHVDHGKT) serves as a coordination point for GTP. The tract at residues 440–444 (GITQH) is G2. A G3 region spans residues 461–464 (DTPG). Residues 461–465 (DTPGH) and 515–518 (NKMD) contribute to the GTP site. Positions 515 to 518 (NKMD) are G4. The tract at residues 551–553 (SAK) is G5.

Belongs to the TRAFAC class translation factor GTPase superfamily. Classic translation factor GTPase family. IF-2 subfamily.

It localises to the cytoplasm. Its function is as follows. One of the essential components for the initiation of protein synthesis. Protects formylmethionyl-tRNA from spontaneous hydrolysis and promotes its binding to the 30S ribosomal subunits. Also involved in the hydrolysis of GTP during the formation of the 70S ribosomal complex. The sequence is that of Translation initiation factor IF-2 from Psychrobacter sp. (strain PRwf-1).